The following is a 387-amino-acid chain: Anhydro-N-acetylmuramic acid kinase (387 aa).

Gly17–Asp24 contributes to the ATP binding site.

Belongs to the anhydro-N-acetylmuramic acid kinase family.

It catalyses the reaction 1,6-anhydro-N-acetyl-beta-muramate + ATP + H2O = N-acetyl-D-muramate 6-phosphate + ADP + H(+). Its pathway is amino-sugar metabolism; 1,6-anhydro-N-acetylmuramate degradation. The protein operates within cell wall biogenesis; peptidoglycan recycling. Catalyzes the specific phosphorylation of 1,6-anhydro-N-acetylmuramic acid (anhMurNAc) with the simultaneous cleavage of the 1,6-anhydro ring, generating MurNAc-6-P. Is required for the utilization of anhMurNAc either imported from the medium or derived from its own cell wall murein, and thus plays a role in cell wall recycling. In Burkholderia pseudomallei (strain K96243), this protein is Anhydro-N-acetylmuramic acid kinase.